The following is a 142-amino-acid chain: Transcription antitermination protein NusB (142 aa).

The protein belongs to the NusB family.

In terms of biological role, involved in transcription antitermination. Required for transcription of ribosomal RNA (rRNA) genes. Binds specifically to the boxA antiterminator sequence of the ribosomal RNA (rrn) operons. This Thermotoga petrophila (strain ATCC BAA-488 / DSM 13995 / JCM 10881 / RKU-1) protein is Transcription antitermination protein NusB.